Reading from the N-terminus, the 195-residue chain is HTH-type transcriptional regulator BetI (195 aa).

The 61-residue stretch at 8–68 folds into the HTH tetR-type domain; it reads PIRRQQLIEA…ATMRYLISHL (61 aa). Positions 31 to 50 form a DNA-binding region, H-T-H motif; that stretch reads SIVQIARRAGVSNGIISHYF.

It participates in amine and polyamine biosynthesis; betaine biosynthesis via choline pathway [regulation]. In terms of biological role, repressor involved in the biosynthesis of the osmoprotectant glycine betaine. It represses transcription of the choline transporter BetT and the genes of BetAB involved in the synthesis of glycine betaine. The protein is HTH-type transcriptional regulator BetI of Pectobacterium carotovorum subsp. carotovorum (strain PC1).